Consider the following 347-residue polypeptide: Isopentenyl-diphosphate delta-isomerase (347 aa).

9–10 serves as a coordination point for substrate; it reads RK. FMN is bound by residues 65–67, Ser-95, and Asn-124; that span reads AMT. 95 to 97 provides a ligand contact to substrate; sequence STH. Gln-154 serves as a coordination point for substrate. Mg(2+) is bound at residue Glu-155. FMN contacts are provided by residues Lys-186, Ser-211, Thr-216, 262-264, and 283-284; these read GVR and SR.

Belongs to the IPP isomerase type 2 family. As to quaternary structure, homooctamer. Dimer of tetramers. The cofactor is FMN. It depends on NADPH as a cofactor. Mg(2+) is required as a cofactor.

The protein resides in the cytoplasm. The catalysed reaction is isopentenyl diphosphate = dimethylallyl diphosphate. In terms of biological role, involved in the biosynthesis of isoprenoids. Catalyzes the 1,3-allylic rearrangement of the homoallylic substrate isopentenyl (IPP) to its allylic isomer, dimethylallyl diphosphate (DMAPP). The sequence is that of Isopentenyl-diphosphate delta-isomerase from Staphylococcus saprophyticus subsp. saprophyticus (strain ATCC 15305 / DSM 20229 / NCIMB 8711 / NCTC 7292 / S-41).